The sequence spans 466 residues: Methylenetetrahydrofolate--tRNA-(uracil-5-)-methyltransferase TrmFO (466 aa).

16 to 21 (GGGMAG) is an FAD binding site.

The protein belongs to the MnmG family. TrmFO subfamily. FAD is required as a cofactor.

It localises to the cytoplasm. It catalyses the reaction uridine(54) in tRNA + (6R)-5,10-methylene-5,6,7,8-tetrahydrofolate + NADH + H(+) = 5-methyluridine(54) in tRNA + (6S)-5,6,7,8-tetrahydrofolate + NAD(+). It carries out the reaction uridine(54) in tRNA + (6R)-5,10-methylene-5,6,7,8-tetrahydrofolate + NADPH + H(+) = 5-methyluridine(54) in tRNA + (6S)-5,6,7,8-tetrahydrofolate + NADP(+). Functionally, catalyzes the folate-dependent formation of 5-methyl-uridine at position 54 (M-5-U54) in all tRNAs. This chain is Methylenetetrahydrofolate--tRNA-(uracil-5-)-methyltransferase TrmFO, found in Maricaulis maris (strain MCS10) (Caulobacter maris).